A 277-amino-acid polypeptide reads, in one-letter code: 2-dehydro-3-deoxyphosphooctonate aldolase (277 aa).

This sequence belongs to the KdsA family.

The protein resides in the cytoplasm. The catalysed reaction is D-arabinose 5-phosphate + phosphoenolpyruvate + H2O = 3-deoxy-alpha-D-manno-2-octulosonate-8-phosphate + phosphate. The protein operates within carbohydrate biosynthesis; 3-deoxy-D-manno-octulosonate biosynthesis; 3-deoxy-D-manno-octulosonate from D-ribulose 5-phosphate: step 2/3. It functions in the pathway bacterial outer membrane biogenesis; lipopolysaccharide biosynthesis. This chain is 2-dehydro-3-deoxyphosphooctonate aldolase, found in Hydrogenovibrio crunogenus (strain DSM 25203 / XCL-2) (Thiomicrospira crunogena).